Reading from the N-terminus, the 65-residue chain is Large ribosomal subunit protein bL35 (65 aa).

The tract at residues Met1 to Arg30 is disordered. A compositionally biased stretch (basic residues) spans Lys12–Arg30.

It belongs to the bacterial ribosomal protein bL35 family.

This Alteromonas mediterranea (strain DSM 17117 / CIP 110805 / LMG 28347 / Deep ecotype) protein is Large ribosomal subunit protein bL35.